The following is a 274-amino-acid chain: Putative outer membrane protein CPn_1073/CP_0776/CPj1073/CpB1118 (274 aa).

Positions 1-21 (MRRYLFMVLALCLYRAAPLEA) are cleaved as a signal peptide.

It is found in the cell outer membrane. This Chlamydia pneumoniae (Chlamydophila pneumoniae) protein is Putative outer membrane protein CPn_1073/CP_0776/CPj1073/CpB1118.